The following is an 89-amino-acid chain: Small ribosomal subunit protein uS14 (89 aa).

This sequence belongs to the universal ribosomal protein uS14 family. As to quaternary structure, part of the 30S ribosomal subunit. Contacts proteins S3 and S10.

Functionally, binds 16S rRNA, required for the assembly of 30S particles and may also be responsible for determining the conformation of the 16S rRNA at the A site. This chain is Small ribosomal subunit protein uS14, found in Azobacteroides pseudotrichonymphae genomovar. CFP2.